A 266-amino-acid chain; its full sequence is 22 kDa alpha-zein 14 (266 aa).

Positions 1–21 (MATKILSLLALLALFASATNA) are cleaved as a signal peptide.

Belongs to the zein family.

Functionally, zeins are major seed storage proteins. The protein is 22 kDa alpha-zein 14 of Zea mays (Maize).